The following is a 114-amino-acid chain: Early 4 ORF4 protein (114 aa).

The short motif at 66–75 (RAKRRDRRRR) is the Nuclear localization signal element.

This sequence belongs to the adenoviridae E4 ORF4 family. Interacts with host BAZ1A/ACF1, host PPP2R2A/PP2a-B55alpha subunit, and host PPP2R5E/PP2a-B'B56 subunit. May interact with host SRC. May be phosphorylated by host SRC kinase.

The protein localises to the host nucleus. Its subcellular location is the host cytoplasm. In terms of biological role, plays a role in viral alternative pre-mRNA splicing. Activates dephosphorylation by protein phosphatase 2A of host SR proteins and converts their splicing properties. When expressed alone ex vivo, induces p53/TP53-independent apoptosis called cytoplasmic death. May mimic nutrient/growth signals to activate the host mTOR pathway. The chain is Early 4 ORF4 protein from Homo sapiens (Human).